Consider the following 187-residue polypeptide: MGAANDAVDGRELMSAAVVGRTISRIAHQIIEKTALDSPDSPRVVLLGIPTRGVILASRLAANIGEYSGIEVDHGALDITLYRDDLMSKPPRPLEETEIPAGGVDDALVILVDDVLYSGRSVRSALDALRDVGRPRSVQLAVLVDRGHRELPVRADYVGKNVPTARSESVHVQFSEHDGHDGVVISR.

Residues 109–121 (VILVDDVLYSGRS) carry the PRPP-binding motif.

This sequence belongs to the purine/pyrimidine phosphoribosyltransferase family. PyrR subfamily.

It catalyses the reaction UMP + diphosphate = 5-phospho-alpha-D-ribose 1-diphosphate + uracil. Regulates the transcription of the pyrimidine nucleotide (pyr) operon in response to exogenous pyrimidines. In terms of biological role, also displays a weak uracil phosphoribosyltransferase activity which is not physiologically significant. In Mycobacterium ulcerans (strain Agy99), this protein is Bifunctional protein PyrR.